The chain runs to 228 residues: MKDVKALKLMTLNDVLSQINGDMTLGIGTGSTMELLLPQMAQLIKERGYNITGVCTSNKIAFLAKELGIKICEINDVDHIDLAIDGADEVDPSLNIIKGGGGALFREKVIDEMASRFVVVVDETKIVQYLGETFKLPVEVDKFNWYHILRKIESYADIKVERRVNEDVAFITDNGNYILDCKLPKGIDPYKFHEYLIHLTGVFETGYFLDMADQVIVGTQEGVKILEK.

Residues 29–32 (TGST), 85–88 (DGAD), and 98–101 (KGGG) contribute to the substrate site. Glutamate 107 serves as the catalytic Proton acceptor. Lysine 125 serves as a coordination point for substrate.

It belongs to the ribose 5-phosphate isomerase family. As to quaternary structure, homodimer.

It catalyses the reaction aldehydo-D-ribose 5-phosphate = D-ribulose 5-phosphate. The protein operates within carbohydrate degradation; pentose phosphate pathway; D-ribose 5-phosphate from D-ribulose 5-phosphate (non-oxidative stage): step 1/1. Catalyzes the reversible conversion of ribose-5-phosphate to ribulose 5-phosphate. This is Ribose-5-phosphate isomerase A from Staphylococcus aureus (strain Mu50 / ATCC 700699).